Reading from the N-terminus, the 548-residue chain is Fumarate hydratase class I, anaerobic (548 aa).

[4Fe-4S] cluster is bound at residue Cys-105. N6-acetyllysine is present on Lys-192. [4Fe-4S] cluster-binding residues include Cys-224 and Cys-318.

It belongs to the class-I fumarase family. Homodimer. The cofactor is [4Fe-4S] cluster.

It carries out the reaction (S)-malate = fumarate + H2O. It catalyses the reaction (S,S)-tartrate = oxaloacetate + H2O. Functionally, catalyzes the reversible hydration of fumarate to (S)-malate. Functions in the generation of fumarate for use as an anaerobic electron acceptor. To a lesser extent, also displays D-tartrate dehydratase activity, but is not able to convert (R)-malate, L-tartrate or meso-tartrate. Is required for anaerobic growth on D-tartrate. The sequence is that of Fumarate hydratase class I, anaerobic from Escherichia coli (strain K12).